Consider the following 556-residue polypeptide: Cytochrome P450 monooxygenase polC (556 aa).

A helical membrane pass occupies residues 17–37 (LCFAISLLCAVAIATFLHKLY). Residue Cys-479 participates in heme binding.

Belongs to the cytochrome P450 family. The cofactor is heme.

The protein resides in the membrane. The catalysed reaction is motiol + 3 reduced [NADPH--hemoprotein reductase] + 3 O2 = 4beta-carboxyl motiol + 3 oxidized [NADPH--hemoprotein reductase] + 4 H2O + 4 H(+). Its pathway is secondary metabolite biosynthesis; terpenoid biosynthesis. Cytochrome P450 monooxygenase; part of the gene cluster that mediates the biosynthesis of antifungal fernane-type triterpenoid polytolypin. PolC uses motiol as a substrate and converts the methyl group at position C-4 to a carboxyl group. Within the pathway, the triterpene cyclase polA first catalyzes the cyclization of 2,3-oxidosqualene to motiol, polC converts the 4-alpha-methyl group of motiol to a carboxyl group, polB is responsible for appending a hydroxyl group at the 2-alpha position and polE is a dual functional P450, which can catalyze the formation of both the 1-beta-hydroxyl group and 10-beta-carboxyl group. The protein is Cytochrome P450 monooxygenase polC of Polytolypa hystricis (strain UAMH7299).